The chain runs to 359 residues: Fructose-bisphosphate aldolase (359 aa).

S62 contacts D-glyceraldehyde 3-phosphate. The active-site Proton donor is D110. 4 residues coordinate Zn(2+): H111, D145, E175, and H227. Residue G228 participates in dihydroxyacetone phosphate binding. Position 265 (H265) interacts with Zn(2+). Residues 266–268 (GGS) and 287–290 (NIDT) each bind dihydroxyacetone phosphate.

The protein belongs to the class II fructose-bisphosphate aldolase family. As to quaternary structure, homodimer. Zn(2+) is required as a cofactor.

It catalyses the reaction beta-D-fructose 1,6-bisphosphate = D-glyceraldehyde 3-phosphate + dihydroxyacetone phosphate. The protein operates within carbohydrate degradation; glycolysis; D-glyceraldehyde 3-phosphate and glycerone phosphate from D-glucose: step 4/4. Functionally, catalyzes the aldol condensation of dihydroxyacetone phosphate (DHAP or glycerone-phosphate) with glyceraldehyde 3-phosphate (G3P) to form fructose 1,6-bisphosphate (FBP) in gluconeogenesis and the reverse reaction in glycolysis. The protein is Fructose-bisphosphate aldolase (fba) of Haemophilus influenzae (strain ATCC 51907 / DSM 11121 / KW20 / Rd).